A 375-amino-acid polypeptide reads, in one-letter code: MLLLRALFLELKTNKNCKALLLLLIPLLVGLTLIIYGIVLFSTEGVIDHGDHNHLRARFQLTLEEIIVFVVGSIILFFTLASFCVSCFMLMRSPKQKQLEVDHANKTNLKPKAIVNCDLFQLGDYCVFTFKKLSFKQRFKQDFFARSKFSFRSELYRLCLVGVLIALNLALSLIEIPGIVLPWGSSIQFRFFNTAILFIAVRLVGLLSTSLVALITPWLHLLIHPIHTPISSLFYMVNDFLVLWIFYFFFFHLFKAEVIQTTTVVDNKPFSQLVNTKKTKWTKFFSLLVISFLCGFIEGLGFYFGYFLILGNVSSLGLKIYYDGLQQRDLINSSNVLFFLMTTTAIFSIKYIFEMLFFFSVEKNVVNIANHFGLY.

A run of 7 helical transmembrane segments spans residues 21–41, 66–86, 160–180, 203–223, 234–254, 289–309, and 338–358; these read LLLLIPLLVGLTLIIYGIVLF, IIVFVVGSIILFFTLASFCVS, LVGVLIALNLALSLIEIPGIV, LVGLLSTSLVALITPWLHLLI, FYMVNDFLVLWIFYFFFFHLF, VISFLCGFIEGLGFYFGYFLI, and FFLMTTTAIFSIKYIFEMLFF.

It localises to the cell membrane. This is an uncharacterized protein from Mycoplasma genitalium (strain ATCC 33530 / DSM 19775 / NCTC 10195 / G37) (Mycoplasmoides genitalium).